The chain runs to 456 residues: Exodeoxyribonuclease 7 large subunit (456 aa).

Residues 1–103 (MLPSQSPAIF…DYQIIVESMQ (103 aa)) form a binds ssDNA, also required to bind the small subunit region.

The protein belongs to the XseA family. Heterooligomer composed of two different subunits with an approximate ratio of 4:1 for small to large subunit. Also estimated to have a 6:1 ration for small to large subunits. The cofactor is Does not require a metal cofactor..

The protein localises to the cytoplasm. It catalyses the reaction Exonucleolytic cleavage in either 5'- to 3'- or 3'- to 5'-direction to yield nucleoside 5'-phosphates.. Functionally, bidirectionally degrades single-stranded DNA into large acid-insoluble oligonucleotides, which are then degraded further into small acid-soluble oligonucleotides. It can degrade 3' or 5' ss regions extending from the termini of duplex DNA molecules and displaced ss regions. It can also excise thymine dimers in vitro. ssDNA-binding requires both subunits. Required for production of the mature 5'-end of retron Ec78 or Ec83 msDNA. Overproduction of this subunit in the absence of an equivalent quantity of the small subunit is toxic, causing cell elongation and chromosome fragmentation or loss; its toxicity is mostly suppressed by RecA. The chain is Exodeoxyribonuclease 7 large subunit from Escherichia coli (strain K12).